The chain runs to 253 residues: Solute carrier family 66 member 2 (253 aa).

Transmembrane regions (helical) follow at residues 7 to 27 (GWLL…AMVF), 49 to 69 (FSTY…LFWF), 72 to 92 (HFES…LLML), 125 to 145 (FADY…ITYL), 150 to 170 (ALFV…LGVP), and 214 to 234 (VCGL…YVFT). Residues 14-80 (HQLVSWGAAG…RHFESPLLWQ (67 aa)) form the PQ-loop 1 domain. The region spanning 160-215 (AVLTEAMLGVPQLYRNHRHQSTEGMSIKMVLMWTSGDTFKTAYFLLNGAPLQFSVC) is the PQ-loop 2 domain.

Its subcellular location is the membrane. In Bos taurus (Bovine), this protein is Solute carrier family 66 member 2 (SLC66A2).